The sequence spans 272 residues: Dermonecrotic toxin StSicTox-betaIC1 (272 aa).

Residue histidine 5 is part of the active site. Positions 25 and 27 each coordinate Mg(2+). Catalysis depends on histidine 41, which acts as the Nucleophile. Intrachain disulfides connect cysteine 45–cysteine 51 and cysteine 47–cysteine 191. Mg(2+) is bound at residue aspartate 85.

Belongs to the arthropod phospholipase D family. Class II subfamily. Class IIb sub-subfamily. It depends on Mg(2+) as a cofactor. As to expression, expressed by the venom gland.

It localises to the secreted. It catalyses the reaction an N-(acyl)-sphingosylphosphocholine = an N-(acyl)-sphingosyl-1,3-cyclic phosphate + choline. The catalysed reaction is N-hexanoyl-sphing-4-enine-1-phosphocholine = N-(hexanoyl)-sphing-4-enine-1,3-cyclic phosphate + choline. The enzyme catalyses an N-(acyl)-sphingosylphosphoethanolamine = an N-(acyl)-sphingosyl-1,3-cyclic phosphate + ethanolamine. It carries out the reaction N-dodecanoyl-heptadecasphing-4-enine-1-phosphoethanolamine = N-dodecanoyl-heptadecasphing-4-enine-1,3-cyclic phosphate + ethanolamine. It catalyses the reaction a 1-acyl-sn-glycero-3-phosphoethanolamine = a 1-acyl-sn-glycero-2,3-cyclic phosphate + ethanolamine. The catalysed reaction is 1-tetradecanoyl-sn-glycero-3-phosphoethanolamine = 1-tetradecanoyl-sn-glycero-2,3-cyclic phosphate + ethanolamine. In terms of biological role, dermonecrotic toxins cleave the phosphodiester linkage between the phosphate and headgroup of certain phospholipids (sphingolipid and lysolipid substrates), forming an alcohol (often choline) and a cyclic phosphate. This toxin acts on lysophosphatidylethanolamine (LPE) and ceramide phosphoethanolamine (CPE) with high activity. This toxin acts on sphingomyelin (SM) with very low activity and is not active on lysophosphatidylserine (LPS), lysophosphatidylcholine (LPC) and lysophosphatidylglycerol (LPG). It acts by transphosphatidylation, releasing exclusively cyclic phosphate as second products. It is not surprising that spider toxins have affinity for ethanolamine-containing sphingolipids since they are common in insect prey. Induces dermonecrosis, hemolysis, increased vascular permeability, edema, inflammatory response, and platelet aggregation. This is Dermonecrotic toxin StSicTox-betaIC1 from Sicarius terrosus (Cave spider).